A 107-amino-acid polypeptide reads, in one-letter code: U-scoloptoxin(18)-Er1a (107 aa).

The N-terminal stretch at 1–21 is a signal peptide; sequence MQRFLCLVACSVVLLVLGIVA.

This sequence belongs to the scoloptoxin-18 family. Contains 5 disulfide bonds. As to expression, expressed by the venom gland.

It localises to the secreted. The chain is U-scoloptoxin(18)-Er1a from Ethmostigmus rubripes (Giant centipede).